We begin with the raw amino-acid sequence, 199 residues long: MTKVLVLYYSAYGHIEAMANAVAEGAREAGATVDVKRVPELVPDDVAKASHYKLDQAAPIAKIEELANYDAIIVGTGTRFGRMASQMANFLDQAGGLWARGALNGKVGGAFTSTATQHGGQETTLFTIITNLLHFGMTIVGLNYGFAGQMKLDEVTGGSPYGATTITGGDGSRLPSENELAGARYQGRVIAETAKKLHG.

Residues 4–190 (VLVLYYSAYG…AGARYQGRVI (187 aa)) form the Flavodoxin-like domain. Residues 10–15 (SAYGHI) and 78–80 (TRF) each bind FMN. Y12 serves as a coordination point for NAD(+). W98 is a substrate binding site. FMN is bound by residues 113–119 (STATQHG) and H134.

Belongs to the WrbA family. Requires FMN as cofactor.

The catalysed reaction is a quinone + NADH + H(+) = a quinol + NAD(+). It catalyses the reaction a quinone + NADPH + H(+) = a quinol + NADP(+). The sequence is that of NAD(P)H dehydrogenase (quinone) from Bradyrhizobium sp. (strain BTAi1 / ATCC BAA-1182).